The primary structure comprises 908 residues: MFDTPAVFARITEAAAEAADNAALRGAVVAILRDVQNAGRAAIAEGFAEDPFAARPLTRAYTYLTDGMVKTAMYVASEILHPLATPTQGERIAVLAVGGFGRGEMAPFSDVDLLFLTPYKITAWAESVIESMLYILWDLRLKVGHSSRTVKDCIRLGRDDFTIRTAMLEHRFLAGHAPLARSLDQRLKSELYKDTQREFIEAKLEERDARHRKQGERYMVEPNVKEGKGGLRDLQSLYWIAKYIYEVKETAELVPLGLFTPSEYRTFVQAEEFLWAVRAHLHLVTGRATEQLTFDLQVEVAARMGYQDRAGRRGVEVFMQKYFREATRVGELTRIFLTKLEAAHMKGAPLLERIFRRRRRIKQGYKVVRGRLDVVDPEAFLADKLNLLRIFEEALRTGMLIHPDAMRLVTANLDLIDDGMRNDKEARRIFLDLLLKHGNPERALRRMNELGVLSAFVPEFEPIVAMMQFNMYHSYTVDEHTIQTIVNLAQIEKGELVESLPLASSILKAGVNRKVLYVALLLHDIGKGRPEDHSILGARIARKVAPRLGLSKADCETVEWLVRYHLLMSDMAQKRDISDPRTVRDFAKAVQTTKRLDLLTVLTVCDIRGVGPNTWNNWKATLLRALHAETKRALEMGMEALNREGRGNEAKKALRTALSDWPAGEVKTEIARHYPPYWQGFNVETHVTFAEMLRQLEHSGDPGGIEIRLDPDEDRDATRACFAMADHPGIFSRMAGALALVGANVVDARSYTTKDGYVTDAFWIQDAEGHPYEAARLPRLSQMILKTLKGEVVARDALKSRDKIKKREKAFNVPTHITFDNEGSDIYTIIEVDTRDRPGLLYDLARALAAANVYIANAVIATYGEQVVDSFYVKDMFGLKYHSEAKQRTLETKLRKAITEGAERAAAS.

The tract at residues 1–360 is uridylyltransferase; the sequence is MFDTPAVFAR…LERIFRRRRR (360 aa). Residues 361-718 form a uridylyl-removing region; the sequence is IKQGYKVVRG…LDPDEDRDAT (358 aa). The region spanning 477-599 is the HD domain; that stretch reads VDEHTIQTIV…VQTTKRLDLL (123 aa). 2 consecutive ACT domains span residues 719–801 and 829–904; these read RACF…LKSR and IIEV…GAER.

The protein belongs to the GlnD family. Requires Mg(2+) as cofactor.

It catalyses the reaction [protein-PII]-L-tyrosine + UTP = [protein-PII]-uridylyl-L-tyrosine + diphosphate. The enzyme catalyses [protein-PII]-uridylyl-L-tyrosine + H2O = [protein-PII]-L-tyrosine + UMP + H(+). Its activity is regulated as follows. Uridylyltransferase (UTase) activity is inhibited by glutamine, while glutamine activates uridylyl-removing (UR) activity. Functionally, modifies, by uridylylation and deuridylylation, the PII regulatory proteins (GlnB and homologs), in response to the nitrogen status of the cell that GlnD senses through the glutamine level. Under low glutamine levels, catalyzes the conversion of the PII proteins and UTP to PII-UMP and PPi, while under higher glutamine levels, GlnD hydrolyzes PII-UMP to PII and UMP (deuridylylation). Thus, controls uridylylation state and activity of the PII proteins, and plays an important role in the regulation of nitrogen assimilation and metabolism. The protein is Bifunctional uridylyltransferase/uridylyl-removing enzyme of Ruegeria pomeroyi (strain ATCC 700808 / DSM 15171 / DSS-3) (Silicibacter pomeroyi).